Reading from the N-terminus, the 162-residue chain is Ciliary microtubule inner protein 5 (162 aa).

Positions 1 to 44 (MGSHPTPGLQRTTSAGYRLPPTRPPASVSPAARGGPMASRGLAG) are disordered.

The protein resides in the cell projection. The protein localises to the cilium. The polypeptide is Ciliary microtubule inner protein 5 (Homo sapiens (Human)).